The following is a 144-amino-acid chain: Grifin (144 aa).

One can recognise a Galectin domain in the interval 5-133 (FEAFCAGGLA…DHQLAQVELA (129 aa)). The residue at position 138 (S138) is a Phosphoserine.

Homodimer. In terms of tissue distribution, lens-specific. Located at the interface between lens fiber cells (at protein level).

This is Grifin (Grifin) from Rattus norvegicus (Rat).